Here is a 521-residue protein sequence, read N- to C-terminus: Methionine--tRNA ligase (521 aa).

Positions 14-24 (YYSSGNPHIGH) match the 'HIGH' region motif. Zn(2+) contacts are provided by Cys129, Cys132, Cys151, and His155. The short motif at 306–310 (KMSKS) is the 'KMSKS' region element. An ATP-binding site is contributed by Lys309.

It belongs to the class-I aminoacyl-tRNA synthetase family. MetG type 2A subfamily. Monomer. It depends on Zn(2+) as a cofactor.

It is found in the cytoplasm. It carries out the reaction tRNA(Met) + L-methionine + ATP = L-methionyl-tRNA(Met) + AMP + diphosphate. Its function is as follows. Is required not only for elongation of protein synthesis but also for the initiation of all mRNA translation through initiator tRNA(fMet) aminoacylation. The chain is Methionine--tRNA ligase from Ureaplasma parvum serovar 3 (strain ATCC 700970).